The primary structure comprises 420 residues: Vasopressin V1a receptor (420 aa).

The disordered stretch occupies residues Met-1 to Val-45. Over Met-1 to Glu-54 the chain is Extracellular. Asn-27 is a glycosylation site (N-linked (GlcNAc...) asparagine). Over residues Ala-32–Val-45 the composition is skewed to basic and acidic residues. A helical membrane pass occupies residues Ile-55–Ala-75. Over Leu-76–His-92 the chain is Cytoplasmic. A helical membrane pass occupies residues Leu-93 to Ile-113. Residues Thr-114 to Arg-125 are Extracellular-facing. A disulfide bridge links Cys-124 with Cys-205. A helical transmembrane segment spans residues Val-126–Thr-146. Residues Ala-147 to Arg-168 lie on the Cytoplasmic side of the membrane. A helical membrane pass occupies residues Leu-169–Phe-189. Topologically, residues Ser-190–Gly-225 are extracellular. N-linked (GlcNAc...) asparagine glycosylation is present at Asn-198. Residues Val-226–Trp-246 traverse the membrane as a helical segment. Over Arg-247–Met-294 the chain is Cytoplasmic. The helical transmembrane segment at Thr-295–Trp-315 threads the bilayer. The Extracellular segment spans residues Ser-316–Ser-331. A helical transmembrane segment spans residues Ile-332–Phe-352. The Cytoplasmic portion of the chain corresponds to Phe-353–Thr-420. S-palmitoyl cysteine attachment occurs at residues Cys-367 and Cys-368. The segment at Asp-379–Arg-411 is disordered. Over residues Arg-385–Trp-403 the composition is skewed to polar residues. Ser-406 is subject to Phosphoserine.

It belongs to the G-protein coupled receptor 1 family. Vasopressin/oxytocin receptor subfamily.

Its subcellular location is the cell membrane. Receptor for arginine vasopressin. The activity of this receptor is mediated by G proteins which activate a phosphatidyl-inositol-calcium second messenger system. Involved in social memory formation. The sequence is that of Vasopressin V1a receptor (Avpr1a) from Microtus montanus (Montane vole).